We begin with the raw amino-acid sequence, 100 residues long: ATP synthase subunit g 2, mitochondrial (100 aa).

This sequence belongs to the ATPase g subunit family. F-type ATPases have 2 components, CF(1) - the catalytic core - and CF(0) - the membrane proton channel. CF(0) seems to have nine subunits: a, b, c, d, e, f, g, F6 and 8 (or A6L).

It is found in the mitochondrion membrane. Functionally, mitochondrial membrane ATP synthase (F(1)F(0) ATP synthase or Complex V) produces ATP from ADP in the presence of a proton gradient across the membrane which is generated by electron transport complexes of the respiratory chain. F-type ATPases consist of two structural domains, F(1) - containing the extramembraneous catalytic core, and F(0) - containing the membrane proton channel, linked together by a central stalk and a peripheral stalk. During catalysis, ATP synthesis in the catalytic domain of F(1) is coupled via a rotary mechanism of the central stalk subunits to proton translocation. Part of the complex F(0) domain. Minor subunit located with subunit a in the membrane. The polypeptide is ATP synthase subunit g 2, mitochondrial (Homo sapiens (Human)).